Here is a 224-residue protein sequence, read N- to C-terminus: Triosephosphate isomerase (224 aa).

9–11 (NFK) contributes to the substrate binding site. The Electrophile role is filled by H93. The Proton acceptor role is filled by E141. Substrate contacts are provided by residues I146, G181, and 202 to 203 (AS).

The protein belongs to the triosephosphate isomerase family. Homotetramer; dimer of dimers.

Its subcellular location is the cytoplasm. The enzyme catalyses D-glyceraldehyde 3-phosphate = dihydroxyacetone phosphate. Its pathway is carbohydrate biosynthesis; gluconeogenesis. It participates in carbohydrate degradation; glycolysis; D-glyceraldehyde 3-phosphate from glycerone phosphate: step 1/1. Its function is as follows. Involved in the gluconeogenesis. Catalyzes stereospecifically the conversion of dihydroxyacetone phosphate (DHAP) to D-glyceraldehyde-3-phosphate (G3P). In Pyrobaculum arsenaticum (strain DSM 13514 / JCM 11321 / PZ6), this protein is Triosephosphate isomerase.